The following is a 140-amino-acid chain: Nucleoside diphosphate kinase (140 aa).

ATP-binding residues include K11, F59, R87, T93, R104, and N114. The active-site Pros-phosphohistidine intermediate is H117.

Belongs to the NDK family. Homotetramer. The cofactor is Mg(2+).

The protein localises to the cytoplasm. It catalyses the reaction a 2'-deoxyribonucleoside 5'-diphosphate + ATP = a 2'-deoxyribonucleoside 5'-triphosphate + ADP. The enzyme catalyses a ribonucleoside 5'-diphosphate + ATP = a ribonucleoside 5'-triphosphate + ADP. Major role in the synthesis of nucleoside triphosphates other than ATP. The ATP gamma phosphate is transferred to the NDP beta phosphate via a ping-pong mechanism, using a phosphorylated active-site intermediate. The polypeptide is Nucleoside diphosphate kinase (Novosphingobium aromaticivorans (strain ATCC 700278 / DSM 12444 / CCUG 56034 / CIP 105152 / NBRC 16084 / F199)).